Consider the following 906-residue polypeptide: Protein translocase subunit SecA (906 aa).

ATP contacts are provided by residues Gln-89, 107 to 111 (GEGKT), and Asp-502. 4 residues coordinate Zn(2+): Cys-890, Cys-892, Cys-901, and His-902.

This sequence belongs to the SecA family. As to quaternary structure, monomer and homodimer. Part of the essential Sec protein translocation apparatus which comprises SecA, SecYEG and auxiliary proteins SecDF-YajC and YidC. Zn(2+) serves as cofactor.

It is found in the cell inner membrane. The protein resides in the cytoplasm. The catalysed reaction is ATP + H2O + cellular proteinSide 1 = ADP + phosphate + cellular proteinSide 2.. In terms of biological role, part of the Sec protein translocase complex. Interacts with the SecYEG preprotein conducting channel. Has a central role in coupling the hydrolysis of ATP to the transfer of proteins into and across the cell membrane, serving both as a receptor for the preprotein-SecB complex and as an ATP-driven molecular motor driving the stepwise translocation of polypeptide chains across the membrane. The sequence is that of Protein translocase subunit SecA from Bartonella quintana (strain Toulouse) (Rochalimaea quintana).